The chain runs to 545 residues: Chaperonin GroEL (545 aa).

Residues 30–33, K51, 87–91, G413, 477–479, and D493 each bind ATP; these read TLGP, DGTTT, and NAA.

It belongs to the chaperonin (HSP60) family. As to quaternary structure, forms a cylinder of 14 subunits composed of two heptameric rings stacked back-to-back. Interacts with the co-chaperonin GroES.

The protein localises to the cytoplasm. The enzyme catalyses ATP + H2O + a folded polypeptide = ADP + phosphate + an unfolded polypeptide.. Its function is as follows. Together with its co-chaperonin GroES, plays an essential role in assisting protein folding. The GroEL-GroES system forms a nano-cage that allows encapsulation of the non-native substrate proteins and provides a physical environment optimized to promote and accelerate protein folding. The sequence is that of Chaperonin GroEL from Pseudomonas putida (Arthrobacter siderocapsulatus).